The chain runs to 873 residues: DNA mismatch repair protein PMS1 (873 aa).

The DNA- and ATP-binding stretch occupies residues 1-357 (MTQIHQINDI…FKTTLSDYYN (357 aa)). The span at 379 to 402 (LKTEVFDDRSTTHESDNENYHTAR) shows a compositional bias: basic and acidic residues. The disordered stretch occupies residues 379–423 (LKTEVFDDRSTTHESDNENYHTARSESNQSNHAHFNSTTGVIDKS). The residue at position 393 (Ser-393) is a Phosphoserine. Residues 403–423 (SESNQSNHAHFNSTTGVIDKS) are compositionally biased toward polar residues. A Phosphoserine modification is found at Ser-566. The interaction with MLH1 stretch occupies residues 661 to 873 (YLTLTVSKND…WSSFSKDYEI (213 aa)).

Belongs to the DNA mismatch repair MutL/HexB family. Heterodimer of MLH1 and PMS1, called MutLalpha, which is the major MMR MutL activity correcting base-base mismatches as well as IDLs. The heterodimer binds double strand DNA independently of a mismatch with positive cooperativity and has more than one DNA binding site. Forms a ternary complex with either the MSH2-MSH6 (MutSalpha) or the MSH2-MSH3 heterodimer (MutSbeta), which recognize and bind to mismatch DNA. Ternary complex formation is promoted by ATP binding.

The protein localises to the nucleus. In terms of biological role, required for DNA mismatch repair (MMR), correcting base-base mismatches and insertion-deletion loops (IDLs) resulting from DNA replication, DNA damage or from recombination events between non-identical sequences during meiosis. Component of the MutLalpha heterodimer that forms a ternary complex with the MutS heterodimers, which initially recognize the DNA mismatches. This complex is thought to be responsible for directing the downstream MMR events, including strand discrimination, excision, and resynthesis. Plays a major role in maintaining the genetic stability of simple sequence repeats and in the repair of heteroduplex sites present in meiotic recombination intermediates. The polypeptide is DNA mismatch repair protein PMS1 (PMS1) (Saccharomyces cerevisiae (strain ATCC 204508 / S288c) (Baker's yeast)).